We begin with the raw amino-acid sequence, 235 residues long: Large ribosomal subunit protein uL1 (235 aa).

It belongs to the universal ribosomal protein uL1 family. Part of the 50S ribosomal subunit.

Functionally, binds directly to 23S rRNA. The L1 stalk is quite mobile in the ribosome, and is involved in E site tRNA release. Its function is as follows. Protein L1 is also a translational repressor protein, it controls the translation of the L11 operon by binding to its mRNA. This is Large ribosomal subunit protein uL1 from Synechococcus sp. (strain WH7803).